The chain runs to 291 residues: Protease HtpX (291 aa).

Transmembrane regions (helical) follow at residues 4-24 (IALF…VLNI) and 36-56 (LSGL…ISLM). Histidine 143 contributes to the Zn(2+) binding site. Glutamate 144 is a catalytic residue. A Zn(2+)-binding site is contributed by histidine 147. A run of 2 helical transmembrane segments spans residues 151-171 (GDMI…IFLS) and 199-219 (FIVS…LTMW). Position 225 (glutamate 225) interacts with Zn(2+).

The protein belongs to the peptidase M48B family. The cofactor is Zn(2+).

The protein localises to the cell inner membrane. The chain is Protease HtpX from Aliivibrio fischeri (strain ATCC 700601 / ES114) (Vibrio fischeri).